Consider the following 118-residue polypeptide: Large ribosomal subunit protein bL20 (118 aa).

Belongs to the bacterial ribosomal protein bL20 family.

Its function is as follows. Binds directly to 23S ribosomal RNA and is necessary for the in vitro assembly process of the 50S ribosomal subunit. It is not involved in the protein synthesizing functions of that subunit. The sequence is that of Large ribosomal subunit protein bL20 from Hahella chejuensis (strain KCTC 2396).